Reading from the N-terminus, the 452-residue chain is Mitochondrial import inner membrane translocase subunit TIM44 (452 aa).

The residue at position 128 (T128) is a Phosphothreonine. 166–173 (GGEKLGRT) is an ATP binding site. Position 180 is a phosphoserine (S180). K217 is subject to N6-succinyllysine.

This sequence belongs to the Tim44 family. As to quaternary structure, probable component of the PAM complex at least composed of a mitochondrial HSP70 protein, GRPEL1 or GRPEL2, TIMM44, TIMM16/PAM16 and TIMM14/DNAJC19. The complex interacts with the TIMM23 component of the TIM23 complex. Interacts with SLC25A4/ANT1 and SLC25A5/ANT2; leading to inhibit the presequence translocase TIMM23, thereby promoting stabilization of PINK1.

The protein resides in the mitochondrion inner membrane. The protein localises to the mitochondrion matrix. Functionally, essential component of the PAM complex, a complex required for the translocation of transit peptide-containing proteins from the inner membrane into the mitochondrial matrix in an ATP-dependent manner. Recruits mitochondrial HSP70 to drive protein translocation into the matrix using ATP as an energy source. This is Mitochondrial import inner membrane translocase subunit TIM44 (TIMM44) from Homo sapiens (Human).